Consider the following 326-residue polypeptide: Methionine import ATP-binding protein MetN (326 aa).

The ABC transporter domain maps to 1–226 (MVFYTIGPQT…PQQPITRQFV (226 aa)). Position 23 to 30 (23 to 30 (GYSGAGKS)) interacts with ATP.

This sequence belongs to the ABC transporter superfamily. Methionine importer (TC 3.A.1.24) family. As to quaternary structure, the complex is composed of two ATP-binding proteins (MetN), two transmembrane proteins (MetI) and a solute-binding protein (MetQ).

It is found in the cell inner membrane. It carries out the reaction L-methionine(out) + ATP + H2O = L-methionine(in) + ADP + phosphate + H(+). The enzyme catalyses D-methionine(out) + ATP + H2O = D-methionine(in) + ADP + phosphate + H(+). In terms of biological role, part of the ABC transporter complex MetNIQ involved in methionine import. Responsible for energy coupling to the transport system. The sequence is that of Methionine import ATP-binding protein MetN from Erwinia pyrifoliae (strain DSM 12162 / Ep1/96).